A 355-amino-acid chain; its full sequence is MISAAIVGGTGYTGIELIRLLSAHPKVSIDLLTSRSEAGTRADEIFPSLRGISDIVFSDLGDETLATLQQCDVVFFATPHGVAMKQAEALTQAGVKVIDLAADFRLQSLSEFEHWYQQMHTCPDLLKTAVYGLPEVNRAKIAEALVVGNPGCYPTTAILGLKPIIEAQNKQSKQLIESRIVIDAKSGVSGAGRQASLALNYAESTDNFKAYSVEGHRHLPEIEQGVAQLLDSQFKHRIRFLPHLVPMIRGMLSSIHMELTDAGALVDWQQVFEQSYASEQFIDVMPKGLYPDTRSVRASNRLRIAVHQDNERAELTVIVVQDNLVKGAAGQAVQNMNVMFGLDESLGLNFAPIVP.

The active site involves C152.

It belongs to the NAGSA dehydrogenase family. Type 1 subfamily.

Its subcellular location is the cytoplasm. The catalysed reaction is N-acetyl-L-glutamate 5-semialdehyde + phosphate + NADP(+) = N-acetyl-L-glutamyl 5-phosphate + NADPH + H(+). It participates in amino-acid biosynthesis; L-arginine biosynthesis; N(2)-acetyl-L-ornithine from L-glutamate: step 3/4. In terms of biological role, catalyzes the NADPH-dependent reduction of N-acetyl-5-glutamyl phosphate to yield N-acetyl-L-glutamate 5-semialdehyde. The protein is N-acetyl-gamma-glutamyl-phosphate reductase of Psychrobacter cryohalolentis (strain ATCC BAA-1226 / DSM 17306 / VKM B-2378 / K5).